The sequence spans 280 residues: 3-methyl-2-oxobutanoate hydroxymethyltransferase (280 aa).

Residues Asp60 and Asp99 each contribute to the Mg(2+) site. Residues 60–61, Asp99, and Lys129 each bind 3-methyl-2-oxobutanoate; that span reads DS. Residue Glu131 coordinates Mg(2+). Glu198 functions as the Proton acceptor in the catalytic mechanism.

The protein belongs to the PanB family. Homodecamer; pentamer of dimers. The cofactor is Mg(2+).

It is found in the cytoplasm. It carries out the reaction 3-methyl-2-oxobutanoate + (6R)-5,10-methylene-5,6,7,8-tetrahydrofolate + H2O = 2-dehydropantoate + (6S)-5,6,7,8-tetrahydrofolate. Its pathway is cofactor biosynthesis; (R)-pantothenate biosynthesis; (R)-pantoate from 3-methyl-2-oxobutanoate: step 1/2. Catalyzes the reversible reaction in which hydroxymethyl group from 5,10-methylenetetrahydrofolate is transferred onto alpha-ketoisovalerate to form ketopantoate. The sequence is that of 3-methyl-2-oxobutanoate hydroxymethyltransferase from Thermobifida fusca (strain YX).